The following is a 275-amino-acid chain: MRRSRSSAAAKLRGQKRSGASGASAAPAASAAAALAPSATRTRRSASQAGSKSQAVEKPPSEKPRLRRSSPRAQEEGPGEPPPPELALLPPPPPPPPTPATPTSSASNLDLGEQRERWETFQKRQKLTSEGAAKLLLDTFEYQGLVKHTGGCHCGAVRFEVWASADLHIFDCNCSICKKKQNRHFIVPASRFKLLKGAEHITTYTFNTHKAQHTFCKRCGVQSFYTPRSNPGGFGIAPHCLDEGTVRSMVTEEFNGSDWEKAMKEHKTIKNMSKE.

Composition is skewed to low complexity over residues 1–10 and 17–51; these read MRRSRSSAAA and RSGASGASAAPAASAAAALAPSATRTRRSASQAGS. Residues 1–109 are disordered; that stretch reads MRRSRSSAAA…ATPTSSASNL (109 aa). 2 positions are modified to phosphoserine: Ser-18 and Ser-21. Arg-43 is modified (omega-N-methylarginine). Pro residues predominate over residues 79 to 100; it reads GEPPPPELALLPPPPPPPPTPA. Thr-98, Thr-101, and Thr-103 each carry phosphothreonine. A CENP-V/GFA domain is found at 148 to 260; sequence HTGGCHCGAV…TEEFNGSDWE (113 aa). The Zn(2+) site is built by Cys-152, Cys-154, Cys-172, Cys-174, Cys-177, Cys-216, and Cys-219. At Ser-257 the chain carries Phosphoserine.

This sequence belongs to the Gfa family. The cofactor is Zn(2+).

The protein resides in the chromosome. It is found in the centromere. The protein localises to the kinetochore. It localises to the nucleus. Its subcellular location is the cytoplasm. The protein resides in the cytoskeleton. It is found in the spindle. In terms of biological role, required for distribution of pericentromeric heterochromatin in interphase nuclei and for centromere formation and organization, chromosome alignment and cytokinesis. In Homo sapiens (Human), this protein is Centromere protein V (CENPV).